A 139-amino-acid chain; its full sequence is Trafficking protein particle complex subunit 2-like protein (139 aa).

This sequence belongs to the TRAPP small subunits family. Sedlin subfamily.

It localises to the cytoplasm. The protein localises to the perinuclear region. It is found in the endoplasmic reticulum. The protein resides in the golgi apparatus. In terms of biological role, may play a role in vesicular transport from endoplasmic reticulum to Golgi. The protein is Trafficking protein particle complex subunit 2-like protein (TRAPPC2L) of Taeniopygia guttata (Zebra finch).